A 277-amino-acid chain; its full sequence is Phosphatidylglycerol--prolipoprotein diacylglyceryl transferase (277 aa).

The next 4 membrane-spanning stretches (helical) occupy residues 16 to 36 (LGPIVIRWYALAYLAGFLFGW), 58 to 78 (FLTWAIVGVLLGGRLGFVLFY), 93 to 113 (IWSGGMSFHGGLTGIVAAILL), and 119 to 139 (GFSPFALGDLVAVAGPVGLFL). R141 lines the a 1,2-diacyl-sn-glycero-3-phospho-(1'-sn-glycerol) pocket. Helical transmembrane passes span 182-202 (AALEGLVLFAVLAWLASKPAV), 207-227 (GTLSGTFLVGYGIARILGEVF), and 239-259 (FGVTMGQILSVPMVLIGLWIL).

It belongs to the Lgt family.

The protein resides in the cell inner membrane. The catalysed reaction is L-cysteinyl-[prolipoprotein] + a 1,2-diacyl-sn-glycero-3-phospho-(1'-sn-glycerol) = an S-1,2-diacyl-sn-glyceryl-L-cysteinyl-[prolipoprotein] + sn-glycerol 1-phosphate + H(+). It functions in the pathway protein modification; lipoprotein biosynthesis (diacylglyceryl transfer). In terms of biological role, catalyzes the transfer of the diacylglyceryl group from phosphatidylglycerol to the sulfhydryl group of the N-terminal cysteine of a prolipoprotein, the first step in the formation of mature lipoproteins. This chain is Phosphatidylglycerol--prolipoprotein diacylglyceryl transferase, found in Rhodospirillum centenum (strain ATCC 51521 / SW).